A 202-amino-acid chain; its full sequence is MSGEWQPRTLLGRLVVEGKIKSIDEVFARNMPIREVEIIDTLLPGLKSEVLSVGFVQRQTDSGEVSQYQVTVAVGNEDGYVGVGMGKSRQIGIAIEKATRRAKLNIVPVRRGCGSWECLCGEPHSIPFKVEGKAGSVKIELIPAPKGVGLVASDVAKTVLRLAGIKDVWSRSYGETRTTHNMAKAVYEALKKTYQFYSPDQW.

The S5 DRBM domain maps to 46–109 (LKSEVLSVGF…RRAKLNIVPV (64 aa)).

Belongs to the universal ribosomal protein uS5 family. As to quaternary structure, part of the 30S ribosomal subunit. Contacts protein S4.

In terms of biological role, with S4 and S12 plays an important role in translational accuracy. The sequence is that of Small ribosomal subunit protein uS5 from Thermofilum pendens (strain DSM 2475 / Hrk 5).